The chain runs to 440 residues: Probable exopolygalacturonase C (440 aa).

The N-terminal stretch at 1 to 19 is a signal peptide; it reads MSVFKASFLFLLSSSLVHG. N82 and N99 each carry an N-linked (GlcNAc...) asparagine glycan. PbH1 repeat units lie at residues 215–236, 238–259, and 265–288; these read GTNI…AVGA, SHDT…SIGS, and TDFA…YAAR. The active-site Proton donor is the D229. H253 is an active-site residue. N-linked (GlcNAc...) asparagine glycans are attached at residues N269, N301, N311, and N334. Cysteines 387 and 393 form a disulfide. Residues N417 and N432 are each glycosylated (N-linked (GlcNAc...) asparagine).

The protein belongs to the glycosyl hydrolase 28 family.

It is found in the secreted. It catalyses the reaction [(1-&gt;4)-alpha-D-galacturonosyl](n) + H2O = alpha-D-galacturonate + [(1-&gt;4)-alpha-D-galacturonosyl](n-1). In terms of biological role, specific in hydrolyzing the terminal glycosidic bond of polygalacturonic acid and oligogalacturonates. This Aspergillus niger (strain ATCC MYA-4892 / CBS 513.88 / FGSC A1513) protein is Probable exopolygalacturonase C (pgxC).